Consider the following 185-residue polypeptide: Flavodoxin (185 aa).

The region spanning 4 to 159 (VLVIYDTRTG…ACRRLGRRLA (156 aa)) is the Flavodoxin-like domain.

Belongs to the flavodoxin family. FMN serves as cofactor.

Low-potential electron donor to a number of redox enzymes. The sequence is that of Flavodoxin (fldA) from Aquifex aeolicus (strain VF5).